Consider the following 28-residue polypeptide: Conotoxin Vi14b (28 aa).

2 disulfides stabilise this stretch: Cys4–Cys21 and Cys7–Cys18. Lys15 and Lys25 each carry N6-acetyllysine.

The two N6-acetyllysines at position 15 and 25 have been deduced from the mass difference of 42. They are not common in venom proteins. Expressed by the venom gland.

The protein resides in the secreted. Functionally, in vitro, inhibits proliferation of the mice ovarian cancer cells ID8. This is Conotoxin Vi14b from Conus virgo (Virgin cone).